The sequence spans 370 residues: Uroporphyrinogen decarboxylase (370 aa).

Substrate is bound by residues 29-33 (RQAGR), Asp79, Tyr155, Ser210, and His342.

The protein belongs to the uroporphyrinogen decarboxylase family. In terms of assembly, homodimer.

The protein localises to the cytoplasm. The catalysed reaction is uroporphyrinogen III + 4 H(+) = coproporphyrinogen III + 4 CO2. The protein operates within porphyrin-containing compound metabolism; protoporphyrin-IX biosynthesis; coproporphyrinogen-III from 5-aminolevulinate: step 4/4. Functionally, catalyzes the decarboxylation of four acetate groups of uroporphyrinogen-III to yield coproporphyrinogen-III. The protein is Uroporphyrinogen decarboxylase of Acidovorax sp. (strain JS42).